We begin with the raw amino-acid sequence, 314 residues long: Olfactory receptor 1E1 (314 aa).

The Extracellular portion of the chain corresponds to methionine 1 to asparagine 25. Residue asparagine 5 is glycosylated (N-linked (GlcNAc...) asparagine). The chain crosses the membrane as a helical span at residues leucine 26–isoleucine 49. The Cytoplasmic portion of the chain corresponds to arginine 50–threonine 57. Residues proline 58 to proline 79 traverse the membrane as a helical segment. Residues lysine 80–glutamine 100 lie on the Extracellular side of the membrane. Cysteine 97 and cysteine 189 are joined by a disulfide. Residues methionine 101–tyrosine 120 form a helical membrane-spanning segment. The Cytoplasmic segment spans residues aspartate 121–methionine 139. The helical transmembrane segment at leucine 140–leucine 158 threads the bilayer. The Extracellular segment spans residues histidine 159–asparagine 195. A helical transmembrane segment spans residues glutamate 196–alanine 219. The Cytoplasmic portion of the chain corresponds to arginine 220–lysine 236. A helical transmembrane segment spans residues alanine 237 to tyrosine 259. Residues leucine 260 to threonine 272 lie on the Extracellular side of the membrane. A helical membrane pass occupies residues valine 273 to leucine 292. The Cytoplasmic segment spans residues arginine 293–leucine 314.

It belongs to the G-protein coupled receptor 1 family.

It localises to the cell membrane. Odorant receptor. The chain is Olfactory receptor 1E1 (OR1E1) from Gorilla gorilla gorilla (Western lowland gorilla).